The primary structure comprises 341 residues: Nicotinate-nucleotide--dimethylbenzimidazole phosphoribosyltransferase (341 aa).

Glu306 acts as the Proton acceptor in catalysis.

This sequence belongs to the CobT family.

The enzyme catalyses 5,6-dimethylbenzimidazole + nicotinate beta-D-ribonucleotide = alpha-ribazole 5'-phosphate + nicotinate + H(+). It functions in the pathway nucleoside biosynthesis; alpha-ribazole biosynthesis; alpha-ribazole from 5,6-dimethylbenzimidazole: step 1/2. Catalyzes the synthesis of alpha-ribazole-5'-phosphate from nicotinate mononucleotide (NAMN) and 5,6-dimethylbenzimidazole (DMB). The protein is Nicotinate-nucleotide--dimethylbenzimidazole phosphoribosyltransferase of Methylocella silvestris (strain DSM 15510 / CIP 108128 / LMG 27833 / NCIMB 13906 / BL2).